The following is a 446-amino-acid chain: Glutamyl-tRNA reductase (446 aa).

Substrate is bound by residues 49 to 52 (TCNR), serine 108, 113 to 115 (ETQ), and glutamine 119. Residue cysteine 50 is the Nucleophile of the active site. Residue 188–193 (GAGKMS) participates in NADP(+) binding.

The protein belongs to the glutamyl-tRNA reductase family. Homodimer.

The enzyme catalyses (S)-4-amino-5-oxopentanoate + tRNA(Glu) + NADP(+) = L-glutamyl-tRNA(Glu) + NADPH + H(+). It participates in porphyrin-containing compound metabolism; protoporphyrin-IX biosynthesis; 5-aminolevulinate from L-glutamyl-tRNA(Glu): step 1/2. In terms of biological role, catalyzes the NADPH-dependent reduction of glutamyl-tRNA(Glu) to glutamate 1-semialdehyde (GSA). This Desulforudis audaxviator (strain MP104C) protein is Glutamyl-tRNA reductase.